A 352-amino-acid chain; its full sequence is 4-hydroxy-2-oxovalerate aldolase 5 (352 aa).

The Pyruvate carboxyltransferase domain occupies 9 to 261; it reads IRVTDSSLRD…RTGIDTLKII (253 aa). 17–18 is a substrate binding site; the sequence is RD. Residue aspartate 18 participates in Mn(2+) binding. Histidine 21 serves as the catalytic Proton acceptor. Substrate is bound by residues serine 171 and histidine 200. Residues histidine 200 and histidine 202 each contribute to the Mn(2+) site. Tyrosine 291 lines the substrate pocket.

Belongs to the 4-hydroxy-2-oxovalerate aldolase family.

It carries out the reaction (S)-4-hydroxy-2-oxopentanoate = acetaldehyde + pyruvate. The chain is 4-hydroxy-2-oxovalerate aldolase 5 from Rhodococcus opacus (strain B4).